Here is a 262-residue protein sequence, read N- to C-terminus: Pyridoxine 5'-phosphate synthase (262 aa).

Asparagine 6 contributes to the 3-amino-2-oxopropyl phosphate binding site. 8-9 is a binding site for 1-deoxy-D-xylulose 5-phosphate; sequence DH. Arginine 17 is a binding site for 3-amino-2-oxopropyl phosphate. Histidine 43 functions as the Proton acceptor in the catalytic mechanism. 1-deoxy-D-xylulose 5-phosphate is bound by residues arginine 45 and histidine 50. Glutamate 70 serves as the catalytic Proton acceptor. A 1-deoxy-D-xylulose 5-phosphate-binding site is contributed by threonine 102. Histidine 215 acts as the Proton donor in catalysis. 3-amino-2-oxopropyl phosphate-binding positions include glycine 216 and 237-238; that span reads GH.

This sequence belongs to the PNP synthase family. As to quaternary structure, homooctamer; tetramer of dimers.

Its subcellular location is the cytoplasm. The enzyme catalyses 3-amino-2-oxopropyl phosphate + 1-deoxy-D-xylulose 5-phosphate = pyridoxine 5'-phosphate + phosphate + 2 H2O + H(+). The protein operates within cofactor biosynthesis; pyridoxine 5'-phosphate biosynthesis; pyridoxine 5'-phosphate from D-erythrose 4-phosphate: step 5/5. In terms of biological role, catalyzes the complicated ring closure reaction between the two acyclic compounds 1-deoxy-D-xylulose-5-phosphate (DXP) and 3-amino-2-oxopropyl phosphate (1-amino-acetone-3-phosphate or AAP) to form pyridoxine 5'-phosphate (PNP) and inorganic phosphate. This is Pyridoxine 5'-phosphate synthase from Helicobacter pylori (strain J99 / ATCC 700824) (Campylobacter pylori J99).